The chain runs to 257 residues: Imidazole glycerol phosphate synthase subunit HisF (257 aa).

Residues D11 and D130 contribute to the active site.

It belongs to the HisA/HisF family. As to quaternary structure, heterodimer of HisH and HisF.

It is found in the cytoplasm. The catalysed reaction is 5-[(5-phospho-1-deoxy-D-ribulos-1-ylimino)methylamino]-1-(5-phospho-beta-D-ribosyl)imidazole-4-carboxamide + L-glutamine = D-erythro-1-(imidazol-4-yl)glycerol 3-phosphate + 5-amino-1-(5-phospho-beta-D-ribosyl)imidazole-4-carboxamide + L-glutamate + H(+). It participates in amino-acid biosynthesis; L-histidine biosynthesis; L-histidine from 5-phospho-alpha-D-ribose 1-diphosphate: step 5/9. Its function is as follows. IGPS catalyzes the conversion of PRFAR and glutamine to IGP, AICAR and glutamate. The HisF subunit catalyzes the cyclization activity that produces IGP and AICAR from PRFAR using the ammonia provided by the HisH subunit. In Shewanella sp. (strain ANA-3), this protein is Imidazole glycerol phosphate synthase subunit HisF.